Here is a 409-residue protein sequence, read N- to C-terminus: MDPTLTELLHANLEWIFVGGKGGVGKTTTSCALATLFATTPISDAASPGGTRPRRVLLISTDPAHNLSDAFNQRFGPHPTPVKGLEESLAAMEVDPKNFTHGALMSSLTGTKRDGSASSLPEEAAADAAQHTTTFARIGAVLKEAARTMPGIDEISVFAEILHYVRTLSYDLLIFDTAPTGHTLRLLALPQTLNSTFDKLMSLEGLAPMIEAASHLIGSNLGDLGGACGDTAGSCEQATAAPSPSSAAPGAGSAAAASPQSRWCITADEVRSTALHWRQTMEEVQARFSDPNRTSFVCVCIAEFLSVYETERLVQELMKYNIGCDSIVVNQLVLKPSSEPPCRMCSARQKIQAKYLEQIDLLYEDFHVVKMPLLSDEVRGVPALKKFARFLQEPYSPETHGYIDVQEPC.

21–28 (KGGVGKTT) is an ATP binding site. Residue Asp-62 is part of the active site. Residues Glu-303 and Asn-330 each coordinate ATP. Zn(2+)-binding residues include Cys-342 and Cys-345.

The protein belongs to the arsA ATPase family. Homodimer.

The protein resides in the cytoplasm. It is found in the endoplasmic reticulum. In terms of biological role, ATPase required for the post-translational delivery of tail-anchored (TA) proteins to the endoplasmic reticulum. Recognizes and selectively binds the transmembrane domain of TA proteins in the cytosol. This complex then targets to the endoplasmic reticulum by membrane-bound receptors, where the tail-anchored protein is released for insertion. This process is regulated by ATP binding and hydrolysis. ATP binding drives the homodimer towards the closed dimer state, facilitating recognition of newly synthesized TA membrane proteins. ATP hydrolysis is required for insertion. Subsequently, the homodimer reverts towards the open dimer state, lowering its affinity for the membrane-bound receptor, and returning it to the cytosol to initiate a new round of targeting. The protein is ATPase ASNA1 homolog of Leishmania infantum.